A 562-amino-acid chain; its full sequence is NAD-dependent malic enzyme (562 aa).

The Proton donor role is filled by tyrosine 101. Arginine 154 is an NAD(+) binding site. Lysine 172 serves as the catalytic Proton acceptor. 3 residues coordinate a divalent metal cation: glutamate 243, aspartate 244, and aspartate 267. Aspartate 267 and asparagine 415 together coordinate NAD(+).

It belongs to the malic enzymes family. Homotetramer. Mg(2+) serves as cofactor. Requires Mn(2+) as cofactor.

The catalysed reaction is (S)-malate + NAD(+) = pyruvate + CO2 + NADH. The enzyme catalyses oxaloacetate + H(+) = pyruvate + CO2. In Aliivibrio fischeri (strain ATCC 700601 / ES114) (Vibrio fischeri), this protein is NAD-dependent malic enzyme.